The following is a 611-amino-acid chain: Actin-related protein 5 (611 aa).

2 coiled-coil regions span residues 290 to 329 (TLTS…LDRL) and 355 to 386 (SAEE…NIEV).

The protein belongs to the actin family. ARP5 subfamily. Component of the chromatin remodeling INO80 complex.

It is found in the nucleus. Its function is as follows. Proposed core component of the chromatin remodeling INO80 complex which is involved in transcriptional regulation, DNA replication and probably DNA repair. The protein is Actin-related protein 5 (ACTR5) of Gallus gallus (Chicken).